The following is a 72-amino-acid chain: Phycobilisome 37.5 kDa linker polypeptide, phycocyanin-associated, rod (72 aa).

A PBS-linker domain is found at 1-72 (MTSSAAAIRL…ASGNISVREF (72 aa)).

This sequence belongs to the phycobilisome linker protein family.

It localises to the cellular thylakoid membrane. Functionally, rod linker protein, associated with phycocyanin. Linker polypeptides determine the state of aggregation and the location of the disk-shaped phycobiliprotein units within the phycobilisome and modulate their spectroscopic properties in order to mediate a directed and optimal energy transfer. This Pseudanabaena tenuis (strain PCC 7409) protein is Phycobilisome 37.5 kDa linker polypeptide, phycocyanin-associated, rod (cpcH2).